The chain runs to 89 residues: Small ribosomal subunit protein uS19 (89 aa).

The protein belongs to the universal ribosomal protein uS19 family.

Protein S19 forms a complex with S13 that binds strongly to the 16S ribosomal RNA. In Xanthomonas axonopodis pv. citri (strain 306), this protein is Small ribosomal subunit protein uS19.